Consider the following 310-residue polypeptide: Lymphotoxin-beta (310 aa).

At 1 to 27 (MGALGLQGRGGRPQGTGCLLLAVAGAT) the chain is on the cytoplasmic side. Residues 28-48 (SLVTLLLAVPITVLAVLALVP) traverse the membrane as a helical; Signal-anchor for type II membrane protein segment. Residues 49–310 (QEQGGLVMES…LGKCLHSANV (262 aa)) are Extracellular-facing. The disordered stretch occupies residues 67 to 86 (QGLSKSNGLPSRLHSQIPSS). A THD domain is found at 138-293 (PAAHLIGAWM…GKTFFGAVMV (156 aa)). Asparagine 272 carries an N-linked (GlcNAc...) asparagine glycan.

The protein belongs to the tumor necrosis factor family. Heterotrimer of either two LTB and one LTA subunits or (less prevalent) two LTA and one LTB subunits.

The protein localises to the membrane. Cytokine that binds to LTBR/TNFRSF3. May play a specific role in immune response regulation. Provides the membrane anchor for the attachment of the heterotrimeric complex to the cell surface. The chain is Lymphotoxin-beta (LTB) from Marmota monax (Woodchuck).